The primary structure comprises 278 residues: Thiazole synthase (278 aa).

Residue lysine 109 is the Schiff-base intermediate with DXP of the active site. 1-deoxy-D-xylulose 5-phosphate contacts are provided by residues glycine 170, 197-198 (AG), and 219-220 (NT).

It belongs to the ThiG family. As to quaternary structure, homotetramer. Forms heterodimers with either ThiH or ThiS.

It is found in the cytoplasm. It catalyses the reaction [ThiS sulfur-carrier protein]-C-terminal-Gly-aminoethanethioate + 2-iminoacetate + 1-deoxy-D-xylulose 5-phosphate = [ThiS sulfur-carrier protein]-C-terminal Gly-Gly + 2-[(2R,5Z)-2-carboxy-4-methylthiazol-5(2H)-ylidene]ethyl phosphate + 2 H2O + H(+). It functions in the pathway cofactor biosynthesis; thiamine diphosphate biosynthesis. Its function is as follows. Catalyzes the rearrangement of 1-deoxy-D-xylulose 5-phosphate (DXP) to produce the thiazole phosphate moiety of thiamine. Sulfur is provided by the thiocarboxylate moiety of the carrier protein ThiS. In vitro, sulfur can be provided by H(2)S. This is Thiazole synthase from Cupriavidus necator (strain ATCC 17699 / DSM 428 / KCTC 22496 / NCIMB 10442 / H16 / Stanier 337) (Ralstonia eutropha).